The primary structure comprises 238 residues: Uridylate kinase (238 aa).

Residue Lys12 to Gly15 coordinates ATP. Gly54 lines the UMP pocket. Residues Gly55 and Arg59 each coordinate ATP. UMP is bound by residues Asp74 and Thr135 to Thr142. Positions 162, 168, and 171 each coordinate ATP.

Belongs to the UMP kinase family. In terms of assembly, homohexamer.

The protein resides in the cytoplasm. The catalysed reaction is UMP + ATP = UDP + ADP. It participates in pyrimidine metabolism; CTP biosynthesis via de novo pathway; UDP from UMP (UMPK route): step 1/1. With respect to regulation, inhibited by UTP. Functionally, catalyzes the reversible phosphorylation of UMP to UDP. This chain is Uridylate kinase, found in Azoarcus sp. (strain BH72).